The chain runs to 151 residues: UPF0178 protein RD1_0321 (151 aa).

It belongs to the UPF0178 family.

This Roseobacter denitrificans (strain ATCC 33942 / OCh 114) (Erythrobacter sp. (strain OCh 114)) protein is UPF0178 protein RD1_0321.